The primary structure comprises 129 residues: Protein GLUTAMINE DUMPER 2 (129 aa).

Over 1–34 (MQTMEGRQYNYQDSINASSSMVVPHSPWHSPVPY) the chain is Extracellular. Residues 35-55 (LFGGLAAMLALICVALLILAC) form a helical membrane-spanning segment. Topologically, residues 56 to 129 (SYWRLSGSAE…DHNEEEGRRG (74 aa)) are cytoplasmic. The segment at 66–89 (RDLEAGDDAKPDNDTNKTKHTEMP) is disordered. Residues 94 to 98 (VIMAG) carry the VIMAG motif. Positions 106 to 129 (ATPATRSEQSCTCGDHNEEEGRRG) are disordered. Over residues 120-129 (DHNEEEGRRG) the composition is skewed to basic and acidic residues.

The protein belongs to the GLUTAMINE DUMPER 1 (TC 9.B.60) family. Expressed in the vascular tissues.

The protein localises to the membrane. Functionally, probable subunit of an amino acid transporter involved in the regulation of the amino acid metabolism. Stimulates amino acid export by activating nonselective amino acid facilitators. This Arabidopsis thaliana (Mouse-ear cress) protein is Protein GLUTAMINE DUMPER 2 (GDU2).